A 536-amino-acid chain; its full sequence is Butyrophilin-like protein 9 (536 aa).

An N-terminal signal peptide occupies residues 1-35 (MADFSVFLGFLKQIPRCLSIFFTYLLFLQLWEVNS). Ig-like V-type domains are found at residues 36-149 (DKVW…WELE) and 152-241 (GSGS…KEFV). Residues 36-257 (DKVWVLGPEE…FLPRMSPWKK (222 aa)) are Extracellular-facing. Cys59 and Cys133 form a disulfide bridge. 3 N-linked (GlcNAc...) asparagine glycosylation sites follow: Asn102, Asn139, and Asn224. Residues Cys173 and Cys227 are joined by a disulfide bond. Residues 258 to 278 (AFVGTLVVLPLSLIVLTMLAL) traverse the membrane as a helical segment. The Cytoplasmic portion of the chain corresponds to 279 to 536 (RYFYKLRSFQ…PAWAVNEAVS (258 aa)). In terms of domain architecture, B30.2/SPRY spans 307-506 (DWRRSEGQAE…MTICSLPVRG (200 aa)).

This sequence belongs to the immunoglobulin superfamily. BTN/MOG family.

Its subcellular location is the membrane. In Mus musculus (Mouse), this protein is Butyrophilin-like protein 9 (Btnl9).